The primary structure comprises 203 residues: Outer-membrane lipoprotein carrier protein (203 aa).

The N-terminal stretch at 1-21 is a signal peptide; it reads MKKMAIACALLSSVVASSVWA. The disordered stretch occupies residues 178–203; that stretch reads QQNGAVDPSKFTFTPPQGVTIDDQRK.

It belongs to the LolA family. Monomer.

Its subcellular location is the periplasm. Functionally, participates in the translocation of lipoproteins from the inner membrane to the outer membrane. Only forms a complex with a lipoprotein if the residue after the N-terminal Cys is not an aspartate (The Asp acts as a targeting signal to indicate that the lipoprotein should stay in the inner membrane). The sequence is that of Outer-membrane lipoprotein carrier protein from Salmonella agona (strain SL483).